The following is a 353-amino-acid chain: DNA-directed RNA polymerase subunit alpha (353 aa).

Residues 1 to 234 (MVQEKVRVST…DLFIPFLHTE (234 aa)) are alpha N-terminal domain (alpha-NTD). An alpha C-terminal domain (alpha-CTD) region spans residues 266–353 (KKIALKSIFI…LAQSIYSESG (88 aa)).

The protein belongs to the RNA polymerase alpha chain family. In plastids the minimal PEP RNA polymerase catalytic core is composed of four subunits: alpha, beta, beta', and beta''. When a (nuclear-encoded) sigma factor is associated with the core the holoenzyme is formed, which can initiate transcription.

The protein resides in the plastid. It is found in the chloroplast. The enzyme catalyses RNA(n) + a ribonucleoside 5'-triphosphate = RNA(n+1) + diphosphate. In terms of biological role, DNA-dependent RNA polymerase catalyzes the transcription of DNA into RNA using the four ribonucleoside triphosphates as substrates. The polypeptide is DNA-directed RNA polymerase subunit alpha (Panax ginseng (Korean ginseng)).